We begin with the raw amino-acid sequence, 352 residues long: (2E,6E)-farnesyl diphosphate synthase (352 aa).

Isopentenyl diphosphate contacts are provided by lysine 43, arginine 46, and histidine 77. The Mg(2+) site is built by aspartate 84 and aspartate 88. Residues 84–88 carry the DDXXD motif motif; the sequence is DDLID. Arginine 94 is a binding site for isopentenyl diphosphate. The DDXXD motif motif lies at 236–240; the sequence is DDVLG.

The protein belongs to the FPP/GGPP synthase family. The cofactor is Mg(2+).

The enzyme catalyses isopentenyl diphosphate + dimethylallyl diphosphate = (2E)-geranyl diphosphate + diphosphate. It carries out the reaction isopentenyl diphosphate + (2E)-geranyl diphosphate = (2E,6E)-farnesyl diphosphate + diphosphate. The protein operates within isoprenoid biosynthesis; geranyl diphosphate biosynthesis; geranyl diphosphate from dimethylallyl diphosphate and isopentenyl diphosphate: step 1/1. It participates in isoprenoid biosynthesis; farnesyl diphosphate biosynthesis; farnesyl diphosphate from geranyl diphosphate and isopentenyl diphosphate. Catalyzes the sequential condensations of isopentenyl pyrophosphate (IPP) with dimethylallyl diphosphate (DMAPP) to yield geranyl diphosphate (GPP) and with GPP to yield (2E,6E)-farnesyl diphosphate (E,E-FPP). The sequence is that of (2E,6E)-farnesyl diphosphate synthase from Mycobacterium tuberculosis (strain ATCC 25618 / H37Rv).